Consider the following 148-residue polypeptide: Large ribosomal subunit protein bL9 (148 aa).

This sequence belongs to the bacterial ribosomal protein bL9 family.

Its function is as follows. Binds to the 23S rRNA. This Azotobacter vinelandii (strain DJ / ATCC BAA-1303) protein is Large ribosomal subunit protein bL9.